A 326-amino-acid chain; its full sequence is Protein phosphatase PTC7 homolog fig (326 aa).

Residues 40–83 form a disordered region; that stretch reads VQGKSKPRSPHLTSPQCSPEHRPRRFRPPSASGRTAFSSAPRPK. A PPM-type phosphatase domain is found at 64–314; the sequence is RFRPPSASGR…DDITVVLASV (251 aa). The Mn(2+) site is built by aspartate 91, glycine 92, and aspartate 236.

It belongs to the PP2C family. It depends on Mg(2+) as a cofactor. Mn(2+) serves as cofactor.

It carries out the reaction O-phospho-L-seryl-[protein] + H2O = L-seryl-[protein] + phosphate. The enzyme catalyses O-phospho-L-threonyl-[protein] + H2O = L-threonyl-[protein] + phosphate. This is Protein phosphatase PTC7 homolog fig from Drosophila persimilis (Fruit fly).